A 220-amino-acid polypeptide reads, in one-letter code: Deoxyribose-phosphate aldolase (220 aa).

The active-site Proton donor/acceptor is Asp89. Lys151 serves as the catalytic Schiff-base intermediate with acetaldehyde. The active-site Proton donor/acceptor is Lys180.

It belongs to the DeoC/FbaB aldolase family. DeoC type 1 subfamily.

It is found in the cytoplasm. It catalyses the reaction 2-deoxy-D-ribose 5-phosphate = D-glyceraldehyde 3-phosphate + acetaldehyde. The protein operates within carbohydrate degradation; 2-deoxy-D-ribose 1-phosphate degradation; D-glyceraldehyde 3-phosphate and acetaldehyde from 2-deoxy-alpha-D-ribose 1-phosphate: step 2/2. Functionally, catalyzes a reversible aldol reaction between acetaldehyde and D-glyceraldehyde 3-phosphate to generate 2-deoxy-D-ribose 5-phosphate. The protein is Deoxyribose-phosphate aldolase of Streptococcus suis (strain 05ZYH33).